Consider the following 140-residue polypeptide: Large ribosomal subunit protein uL16 (140 aa).

Belongs to the universal ribosomal protein uL16 family. In terms of assembly, part of the 50S ribosomal subunit.

Functionally, binds 23S rRNA and is also seen to make contacts with the A and possibly P site tRNAs. The protein is Large ribosomal subunit protein uL16 of Onion yellows phytoplasma (strain OY-M).